The sequence spans 2974 residues: Mediator of RNA polymerase II transcription subunit 13 (2974 aa).

Basic and acidic residues-rich tracts occupy residues Glu284–Glu299, Met340–Val367, Arg374–Asp390, and Ser624–Pro633. Disordered regions lie at residues Glu284–Thr309, Met340–Asp394, Ser624–Val654, Phe677–Ile749, Leu764–Glu801, Pro1032–Glu1063, Gly1099–Pro1134, Leu1140–Thr1159, Thr1281–Tyr1342, Gln1416–Ala1486, Glu2052–Ala2078, and Gln2247–Met2309. Residues Lys351–Asp396 adopt a coiled-coil conformation. Composition is skewed to basic residues over residues Tyr634–Val654 and Phe677–Pro688. Residues Pro689–Asp717 are compositionally biased toward basic and acidic residues. Over residues Ser1035–Arg1048 the composition is skewed to basic and acidic residues. Polar residues-rich tracts occupy residues Ile1122–Pro1134 and Leu1140–Ser1149. 2 stretches are compositionally biased toward pro residues: residues Arg1284–Met1299 and Pro1326–Pro1340. The segment covering Ile1443–Asn1464 has biased composition (polar residues). Positions Ala1473–Ala1486 are enriched in low complexity. A compositionally biased stretch (polar residues) spans Ser2064–Asn2073. Residues Ala2220–Ala2301 are a coiled coil. 2 stretches are compositionally biased toward basic and acidic residues: residues Gln2247 to Glu2258 and Glu2281 to Glu2292. Positions Trp2347–Val2974 are mediates transcriptional repression.

Belongs to the Mediator complex subunit 13 family. In terms of assembly, component of the Mediator complex.

It localises to the nucleus. Component of the Mediator complex, a coactivator involved in regulated gene transcription of nearly all RNA polymerase II-dependent genes. Mediator functions as a bridge to convey information from gene-specific regulatory proteins to the basal RNA polymerase II transcription machinery. Mediator is recruited to promoters by direct interactions with regulatory proteins and serves as a scaffold for the assembly of a functional preinitiation complex with RNA polymerase II and the general transcription factors. The protein is Mediator of RNA polymerase II transcription subunit 13 (let-19) of Caenorhabditis briggsae.